The chain runs to 358 residues: UDP-N-acetylglucosamine--N-acetylmuramyl-(pentapeptide) pyrophosphoryl-undecaprenol N-acetylglucosamine transferase (358 aa).

Residues 11-13 (TGG), Asn120, Arg161, Ser188, and Gln282 contribute to the UDP-N-acetyl-alpha-D-glucosamine site.

It belongs to the glycosyltransferase 28 family. MurG subfamily.

The protein localises to the cell inner membrane. The catalysed reaction is di-trans,octa-cis-undecaprenyl diphospho-N-acetyl-alpha-D-muramoyl-L-alanyl-D-glutamyl-meso-2,6-diaminopimeloyl-D-alanyl-D-alanine + UDP-N-acetyl-alpha-D-glucosamine = di-trans,octa-cis-undecaprenyl diphospho-[N-acetyl-alpha-D-glucosaminyl-(1-&gt;4)]-N-acetyl-alpha-D-muramoyl-L-alanyl-D-glutamyl-meso-2,6-diaminopimeloyl-D-alanyl-D-alanine + UDP + H(+). It participates in cell wall biogenesis; peptidoglycan biosynthesis. Its function is as follows. Cell wall formation. Catalyzes the transfer of a GlcNAc subunit on undecaprenyl-pyrophosphoryl-MurNAc-pentapeptide (lipid intermediate I) to form undecaprenyl-pyrophosphoryl-MurNAc-(pentapeptide)GlcNAc (lipid intermediate II). This chain is UDP-N-acetylglucosamine--N-acetylmuramyl-(pentapeptide) pyrophosphoryl-undecaprenol N-acetylglucosamine transferase, found in Synechococcus sp. (strain CC9605).